Here is a 252-residue protein sequence, read N- to C-terminus: Eukaryotic translation initiation factor 3 subunit K (252 aa).

The region spanning 46–225 (FDCYANLALL…VKVPTNKENE (180 aa)) is the PCI domain.

Belongs to the eIF-3 subunit K family. Component of the eukaryotic translation initiation factor 3 (eIF-3) complex.

It is found in the cytoplasm. Its function is as follows. Component of the eukaryotic translation initiation factor 3 (eIF-3) complex, which is involved in protein synthesis of a specialized repertoire of mRNAs and, together with other initiation factors, stimulates binding of mRNA and methionyl-tRNAi to the 40S ribosome. The eIF-3 complex specifically targets and initiates translation of a subset of mRNAs involved in cell proliferation. This Aspergillus terreus (strain NIH 2624 / FGSC A1156) protein is Eukaryotic translation initiation factor 3 subunit K.